A 260-amino-acid polypeptide reads, in one-letter code: Protein FAM220A (260 aa).

Disordered stretches follow at residues 1–75 (MKAG…SKAS) and 129–158 (GSDW…GRPG). A compositionally biased stretch (polar residues) spans 35-47 (RNPSPSVVPSWTD).

In terms of assembly, interacts with transcriptional activator STAT3; the interaction occurs in both the nucleus and the cytoplasm, is enhanced by IL6 and promotes STAT3 dephosphorylation, leading to negative regulation of STAT3 transcriptional activator activity. Can interact with both unphosphorylated and phosphorylated STAT3 but interacts preferentially with phosphorylated STAT3 in the nucleus. Interacts with protein phosphatase PTPN2/TC45; this promotes interaction of PTPN2 with STAT3, leading to dephosphorylation of STAT3 by PTPN2. Expressed at high levels in the testis where it is detected within elongated spermatids during the late stages (steps 9-16) of haploid germ cell development and in the tubular lumen (at protein level).

It localises to the nucleus. It is found in the cytoplasm. Its subcellular location is the cytoplasmic vesicle. The protein localises to the secretory vesicle. The protein resides in the acrosome. Promotes dephosphorylation of transcriptional activator STAT3 by interacting with both STAT3 and protein phosphatase PTPN2. This promotes interaction of PTPN2 with STAT3 and mediates STAT3 dephosphorylation by PTPN2, leading to negative regulation of STAT3 transcriptional activator activity. May be required for spermiogenesis or sperm function. This Mus musculus (Mouse) protein is Protein FAM220A.